The following is a 368-amino-acid chain: tRNA/tmRNA (uracil-C(5))-methyltransferase (368 aa).

S-adenosyl-L-methionine contacts are provided by Gln186, Tyr214, Asn219, Glu235, and Asp295. Cys320 serves as the catalytic Nucleophile. Glu354 (proton acceptor) is an active-site residue.

Belongs to the class I-like SAM-binding methyltransferase superfamily. RNA M5U methyltransferase family. TrmA subfamily.

It catalyses the reaction uridine(54) in tRNA + S-adenosyl-L-methionine = 5-methyluridine(54) in tRNA + S-adenosyl-L-homocysteine + H(+). The enzyme catalyses uridine(341) in tmRNA + S-adenosyl-L-methionine = 5-methyluridine(341) in tmRNA + S-adenosyl-L-homocysteine + H(+). In terms of biological role, dual-specificity methyltransferase that catalyzes the formation of 5-methyluridine at position 54 (m5U54) in all tRNAs, and that of position 341 (m5U341) in tmRNA (transfer-mRNA). The polypeptide is tRNA/tmRNA (uracil-C(5))-methyltransferase (Aromatoleum aromaticum (strain DSM 19018 / LMG 30748 / EbN1) (Azoarcus sp. (strain EbN1))).